The sequence spans 986 residues: Probable ATP-dependent RNA helicase ddx42 (986 aa).

Disordered stretches follow at residues M1–D149, A165–N192, and Q206–L252. Positions S29 to G82 are enriched in low complexity. Over residues P105 to P117 the composition is skewed to polar residues. A compositionally biased stretch (low complexity) spans N119 to E137. The segment covering D217–E236 has biased composition (acidic residues). Positions T305–K333 match the Q motif motif. Residues I336–I511 form the Helicase ATP-binding domain. Position 349 to 356 (A349 to T356) interacts with ATP. The short motif at D459–D462 is the DEAD box element. In terms of domain architecture, Helicase C-terminal spans D522–A684. The segment at P688 to R986 is disordered. Residues G696–V723 show a composition bias toward gly residues. Composition is skewed to low complexity over residues N753–N764 and N771–N978.

The protein belongs to the DEAD box helicase family. DDX42 subfamily.

The protein resides in the nucleus. The enzyme catalyses ATP + H2O = ADP + phosphate + H(+). Probable ATP-dependent RNA helicase which may bind to partially double-stranded RNAs (dsRNAs) in order to unwind RNA secondary structures. This Dictyostelium discoideum (Social amoeba) protein is Probable ATP-dependent RNA helicase ddx42 (ddx42).